The chain runs to 356 residues: MYNNNNNFGGGGYNQGGGYNSGGYNNNGGGYNNNNGGYNNNNNNNGGYNNNRPQQQQQQQQQYVNNNNNSFDNNGYGGDDDVTNNSDYQSTTRNIQQIQNAVQILTKLVQLLGTPKDSMDTREKIRNCVDSTTHLISSESGKVKNLTSLASRSRDSKNKLLYQKLVKEFNNCLQQFKDIAQVATKKEKTTPLPVAPDHQQPTTFGRNNNSNNNNQNNHFLNNQQPYYDDDNREDEHQSLMESSRRQQLAQIEAEREYQNSIIQERDEGIRKIEQSIVEINEIFVDLSGLVAEQGVMINTIEASLESTTINTKEGVNHLREASKNQKSSRNKMCWIVLILLIVCAVLGVILFFTLRK.

The Cytoplasmic portion of the chain corresponds to 1 to 333 (MYNNNNNFGG…NQKSSRNKMC (333 aa)). Low complexity-rich tracts occupy residues 32–74 (NNNN…FDNN) and 207–224 (NNNS…NNQQ). Disordered stretches follow at residues 32–88 (NNNN…NSDY) and 187–247 (EKTT…RRQQ). The segment covering 233 to 244 (EDEHQSLMESSR) has biased composition (basic and acidic residues). The region spanning 259–321 (NSIIQERDEG…KEGVNHLREA (63 aa)) is the t-SNARE coiled-coil homology domain. The helical; Anchor for type IV membrane protein transmembrane segment at 334 to 354 (WIVLILLIVCAVLGVILFFTL) threads the bilayer. Topologically, residues 355-356 (RK) are vesicular.

This sequence belongs to the syntaxin family. Component of the SNARE complex composed of syn7A, syn8A, vamp7A and vti1A. Interacts with nsfA, snpA and snpC.

The protein resides in the endosome membrane. In terms of biological role, involved in the targeting and/or fusion of transport vesicles to their target membrane during transport of proteins from the early endosome to the lysosome. Required for fusion of late endosomes with lysosomes and homotypic lysosomal fusion. May be involved in protein trafficking from the plasma membrane to the early endosome (EE) as well as in homotypic fusion of endocytic organelles. The sequence is that of Syntaxin-7A from Dictyostelium discoideum (Social amoeba).